A 291-amino-acid chain; its full sequence is uncharacterized protein (291 aa).

The interval 1-82 (MEAEKETEQE…SYSSSPFETH (82 aa)) is disordered. Low complexity-rich tracts occupy residues 28-43 (HSHS…ISAS) and 59-78 (STSS…SSSP).

This is an uncharacterized protein from Arabidopsis thaliana (Mouse-ear cress).